Consider the following 174-residue polypeptide: Crossover junction endodeoxyribonuclease RuvC (174 aa).

Active-site residues include Asp-8, Glu-69, and Asp-141. Asp-8, Glu-69, and Asp-141 together coordinate Mg(2+).

This sequence belongs to the RuvC family. Homodimer which binds Holliday junction (HJ) DNA. The HJ becomes 2-fold symmetrical on binding to RuvC with unstacked arms; it has a different conformation from HJ DNA in complex with RuvA. In the full resolvosome a probable DNA-RuvA(4)-RuvB(12)-RuvC(2) complex forms which resolves the HJ. Requires Mg(2+) as cofactor.

The protein localises to the cytoplasm. The enzyme catalyses Endonucleolytic cleavage at a junction such as a reciprocal single-stranded crossover between two homologous DNA duplexes (Holliday junction).. Functionally, the RuvA-RuvB-RuvC complex processes Holliday junction (HJ) DNA during genetic recombination and DNA repair. Endonuclease that resolves HJ intermediates. Cleaves cruciform DNA by making single-stranded nicks across the HJ at symmetrical positions within the homologous arms, yielding a 5'-phosphate and a 3'-hydroxyl group; requires a central core of homology in the junction. The consensus cleavage sequence is 5'-(A/T)TT(C/G)-3'. Cleavage occurs on the 3'-side of the TT dinucleotide at the point of strand exchange. HJ branch migration catalyzed by RuvA-RuvB allows RuvC to scan DNA until it finds its consensus sequence, where it cleaves and resolves the cruciform DNA. The polypeptide is Crossover junction endodeoxyribonuclease RuvC (Xanthomonas oryzae pv. oryzae (strain MAFF 311018)).